The primary structure comprises 505 residues: Glutamate--cysteine ligase (505 aa).

It belongs to the glutamate--cysteine ligase type 1 family. Type 1 subfamily.

It carries out the reaction L-cysteine + L-glutamate + ATP = gamma-L-glutamyl-L-cysteine + ADP + phosphate + H(+). It participates in sulfur metabolism; glutathione biosynthesis; glutathione from L-cysteine and L-glutamate: step 1/2. The polypeptide is Glutamate--cysteine ligase (Wigglesworthia glossinidia brevipalpis).